The sequence spans 841 residues: Follistatin-related protein 4 (841 aa).

The signal sequence occupies residues 1 to 22 (MKPGGFWPHLALLGVSLPAVLG). The tract at residues 29–54 (SRSPNMVPGESQAEETRGFEVTRREG) is disordered. Positions 42-54 (EETRGFEVTRREG) are enriched in basic and acidic residues. The 55-residue stretch at 80-134 (TTGQPSCQCLEVCRPRYMPVCGSDGRLYGNHCELRRAACLLGKRIVSVHSKDCFL) folds into the Kazal-like domain. Disulfide bonds link C86–C118, C92–C111, and C100–C132. EF-hand domains follow at residues 173–208 (QKRL…EQDM) and 225–247 (DYNS…IQLS). Ca(2+) is bound by residues D186, D188, N190, H192, E197, D225, N227, D229, S231, and E236. 2 consecutive Ig-like domains span residues 250–336 (PEDK…VLQV) and 340–425 (PVIR…EDIS). Cystine bridges form between C269–C320 and C361–C412. Residue N317 is glycosylated (N-linked (GlcNAc...) asparagine).

The protein localises to the secreted. The protein is Follistatin-related protein 4 (Fstl4) of Mus musculus (Mouse).